Consider the following 105-residue polypeptide: Met repressor (105 aa).

It belongs to the MetJ family. Homodimer.

It is found in the cytoplasm. Its function is as follows. This regulatory protein, when combined with SAM (S-adenosylmethionine) represses the expression of the methionine regulon and of enzymes involved in SAM synthesis. This is Met repressor from Actinobacillus pleuropneumoniae serotype 7 (strain AP76).